Reading from the N-terminus, the 278-residue chain is MDEQQWTGQLDLTVFFDGNRSVSRDIFFEKALKVIRPVYLNQSTIPTFYIVNVGGGYLDGDRYRMNVNIEDNAKVTLTSQGATKIYKTPSNHVEQYQTFNLKDNAYLEYVADPIIAYENAKFYQHNTLNLNNSSSLFYTDILTPGYSKTGEAFKYQYMHLINEIYIEDELVTYDNLLLNPNKQSINEIGYMEHYSHYGSAYFIHEDVNQKLIDSVYETISSYSNTFDCRVAISQLPTHGFAVRIFAYRTQIIEKILGTIQSYIAENIYDRKLDFLRKY.

Belongs to the UreD family. UreD, UreF and UreG form a complex that acts as a GTP-hydrolysis-dependent molecular chaperone, activating the urease apoprotein by helping to assemble the nickel containing metallocenter of UreC. The UreE protein probably delivers the nickel.

The protein localises to the cytoplasm. Functionally, required for maturation of urease via the functional incorporation of the urease nickel metallocenter. In Staphylococcus aureus (strain bovine RF122 / ET3-1), this protein is Urease accessory protein UreD.